The chain runs to 240 residues: UDP-2,3-diacylglucosamine hydrolase (240 aa).

Mn(2+)-binding residues include D8, H10, D41, N79, and H114. Residue 79–80 (NR) coordinates substrate. Substrate is bound by residues D122, S160, N164, K167, and H195. Positions 195 and 197 each coordinate Mn(2+).

This sequence belongs to the LpxH family. The cofactor is Mn(2+).

The protein resides in the cell inner membrane. The enzyme catalyses UDP-2-N,3-O-bis[(3R)-3-hydroxytetradecanoyl]-alpha-D-glucosamine + H2O = 2-N,3-O-bis[(3R)-3-hydroxytetradecanoyl]-alpha-D-glucosaminyl 1-phosphate + UMP + 2 H(+). The protein operates within glycolipid biosynthesis; lipid IV(A) biosynthesis; lipid IV(A) from (3R)-3-hydroxytetradecanoyl-[acyl-carrier-protein] and UDP-N-acetyl-alpha-D-glucosamine: step 4/6. Functionally, hydrolyzes the pyrophosphate bond of UDP-2,3-diacylglucosamine to yield 2,3-diacylglucosamine 1-phosphate (lipid X) and UMP by catalyzing the attack of water at the alpha-P atom. Involved in the biosynthesis of lipid A, a phosphorylated glycolipid that anchors the lipopolysaccharide to the outer membrane of the cell. The sequence is that of UDP-2,3-diacylglucosamine hydrolase from Escherichia coli (strain UTI89 / UPEC).